The primary structure comprises 464 residues: MAASPAAGAAAATVSSFVSPSSFSSVKASKPDRLRPARRAAAVNVRCVSSPPATETSFKTKVPRNANMAKLQAGYLFPEIARRRAAHLLKFPDAKIISLGIGDTTEPIPDVITNAMAKRAHALSTVDGYSGYGAEQGEKKLRAAIAATYYADLGIEETDIFVSDGAKCDISRLQVLFGSNVKIAVQDPSYPAYVDSSVIMGQTGLYQEDVQKYGNIEYMKCSPENGFFPDLSSVPRTDIIFFCSPNNPTGAAASRDQLTKLVKFAKDNGSIIVYDSAYAMYISDDSPKSIFEIPGAKEVAIETASFSKYAGFTGVRLGWTVVPKELLFSDGHPVAKDFNRIVCTCFNGASNISQAGGLGCLSPEGLKAMSDVVGFYKENTKIIVDTFTSLGFNVYGAKNAPYVWVHFPGRNSWDVFAEILEKAHVVTTPGSGFGPGGEGFVRVSAFGHRENIIEAARRLKQLYK.

The transit peptide at 1 to 39 directs the protein to the chloroplast; that stretch reads MAASPAAGAAAATVSSFVSPSSFSSVKASKPDRLRPARR. Residue G102 participates in substrate binding. Y132 contributes to the pyridoxal 5'-phosphate binding site. Substrate is bound by residues E135, K167, Y190, and N247. Pyridoxal 5'-phosphate-binding residues include N247, D275, Y278, S305, and S307. K308 bears the N6-(pyridoxal phosphate)lysine mark. Residue R316 participates in pyridoxal 5'-phosphate binding. Substrate contacts are provided by N347 and R442.

It belongs to the class-I pyridoxal-phosphate-dependent aminotransferase family. LL-diaminopimelate aminotransferase subfamily. As to quaternary structure, homodimer. Pyridoxal 5'-phosphate serves as cofactor.

Its subcellular location is the plastid. The protein resides in the chloroplast. It carries out the reaction (2S,6S)-2,6-diaminopimelate + 2-oxoglutarate = (S)-2,3,4,5-tetrahydrodipicolinate + L-glutamate + H2O + H(+). The protein operates within amino-acid biosynthesis; L-lysine biosynthesis via DAP pathway; LL-2,6-diaminopimelate from (S)-tetrahydrodipicolinate (aminotransferase route): step 1/1. Functionally, required for lysine biosynthesis. Catalyzes the direct conversion of tetrahydrodipicolinate to LL-diaminopimelate, a reaction that requires three enzymes in E.coli. This Oryza sativa subsp. japonica (Rice) protein is Probable LL-diaminopimelate aminotransferase, chloroplastic (AGD2).